The primary structure comprises 355 residues: Tyrosine recombinase XerC (355 aa).

A Core-binding (CB) domain is found at 4–89 (TQFDGDIDSF…AVRGFFAWAY (86 aa)). The segment at 138 to 180 (DDGGAAAASGSGKAAGKTADKSADTVNRSEAPARADKRDNARV) is disordered. Residues 141-154 (GAAAASGSGKAAGK) are compositionally biased toward low complexity. The 192-residue stretch at 158 to 349 (KSADTVNRSE…SIEQLKNRYG (192 aa)) folds into the Tyr recombinase domain. A compositionally biased stretch (basic and acidic residues) spans 168–178 (APARADKRDNA). Active-site residues include arginine 200, lysine 224, histidine 301, arginine 304, and histidine 327. Tyrosine 336 functions as the O-(3'-phospho-DNA)-tyrosine intermediate in the catalytic mechanism.

Belongs to the 'phage' integrase family. XerC subfamily. Forms a cyclic heterotetrameric complex composed of two molecules of XerC and two molecules of XerD.

The protein localises to the cytoplasm. Its function is as follows. Site-specific tyrosine recombinase, which acts by catalyzing the cutting and rejoining of the recombining DNA molecules. The XerC-XerD complex is essential to convert dimers of the bacterial chromosome into monomers to permit their segregation at cell division. It also contributes to the segregational stability of plasmids. This chain is Tyrosine recombinase XerC, found in Bifidobacterium longum subsp. infantis (strain ATCC 15697 / DSM 20088 / JCM 1222 / NCTC 11817 / S12).